Here is a 277-residue protein sequence, read N- to C-terminus: uncharacterized protein (277 aa).

Transmembrane regions (helical) follow at residues 46 to 66, 73 to 93, 143 to 163, 174 to 194, and 228 to 248; these read IAAI…YGGL, LFEG…ILWM, TTVI…VLIL, FFYA…GYGT, and KGLI…MEWV.

Belongs to the oxidase-dependent Fe transporter (OFeT) (TC 9.A.10.1) family.

The protein resides in the cell membrane. This is an uncharacterized protein from Archaeoglobus fulgidus (strain ATCC 49558 / DSM 4304 / JCM 9628 / NBRC 100126 / VC-16).